The primary structure comprises 231 residues: Protein INCA1 (231 aa).

The segment at 75-99 (SLHPLEGLPPPEKLWRRKRKKLHLE) is interaction with CCNA1 and CCNA1/CDK2 complex; essential for CDK2 inhibitory activity. A Nuclear localization signal motif is present at residues 90–95 (RRKRKK). T180 is modified (phosphothreonine).

This sequence belongs to the INCA family. Interacts with CCNA1. Identified in a complex with CCNA1 and CDK2. Interacts with ZNF16; the interaction inhibits INCA1 activity and induces the cell cycle process. Interacts with SPACA9. Interacts with CCNA2, CCNB1 and CCNE1. Interacts with the CCNA1/CDK2 complex. Interacts with ING5, DAZAP2, RNF26, USP15, SPOUT1, DPH7, TRIM26 and RAB5C. Post-translationally, phosphorylated when part of a complex with CCNA1 and CDK2.

The protein resides in the nucleus. The protein localises to the cytoplasm. Its function is as follows. Binds to CDK2-bound cyclins and inhibits the kinase activity of CDK2; binding to cyclins is critical for its function as CDK inhibitor. Inhibits cell growth and proliferation and may play a role in cell cycle control. Required for ING5-mediated regulation of S-phase progression, enhancement of Fas-induced apoptosis and inhibition of cell growth. The chain is Protein INCA1 (Inca1) from Mus musculus (Mouse).